The sequence spans 311 residues: HPr kinase/phosphorylase (311 aa).

Active-site residues include His140 and Lys161. 155–162 contacts ATP; it reads GDSGIGKS. Position 162 (Ser162) interacts with Mg(2+). Residue Asp179 is the Proton acceptor; for phosphorylation activity. Proton donor; for dephosphorylation activity of the active site. Residues 203 to 212 form an important for the catalytic mechanism of both phosphorylation and dephosphorylation region; the sequence is IEIRGIGIID. A Mg(2+)-binding site is contributed by Glu204. Arg245 is a catalytic residue. Positions 266–271 are important for the catalytic mechanism of dephosphorylation; sequence PVKTGR.

It belongs to the HPrK/P family. In terms of assembly, homohexamer. Requires Mg(2+) as cofactor.

It carries out the reaction [HPr protein]-L-serine + ATP = [HPr protein]-O-phospho-L-serine + ADP + H(+). The catalysed reaction is [HPr protein]-O-phospho-L-serine + phosphate + H(+) = [HPr protein]-L-serine + diphosphate. Catalyzes the ATP- as well as the pyrophosphate-dependent phosphorylation of a specific serine residue in HPr, a phosphocarrier protein of the phosphoenolpyruvate-dependent sugar phosphotransferase system (PTS). HprK/P also catalyzes the pyrophosphate-producing, inorganic phosphate-dependent dephosphorylation (phosphorolysis) of seryl-phosphorylated HPr (P-Ser-HPr). The two antagonistic activities of HprK/P are regulated by several intracellular metabolites, which change their concentration in response to the absence or presence of rapidly metabolisable carbon sources (glucose, fructose, etc.) in the growth medium. Therefore, by controlling the phosphorylation state of HPr, HPrK/P is a sensor enzyme that plays a major role in the regulation of carbon metabolism and sugar transport: it mediates carbon catabolite repression (CCR), and regulates PTS-catalyzed carbohydrate uptake and inducer exclusion. The protein is HPr kinase/phosphorylase (hprK) of Enterococcus faecalis (strain ATCC 700802 / V583).